An 80-amino-acid chain; its full sequence is Biotin synthase auxiliary protein (80 aa).

The protein belongs to the BsaP family. The cofactor is iron-sulfur cluster.

Required for the activity of the biotin synthase BioB. The chain is Biotin synthase auxiliary protein from Mycobacterium leprae (strain TN).